Consider the following 333-residue polypeptide: Ketol-acid reductoisomerase (NADP(+)) (333 aa).

The KARI N-terminal Rossmann domain maps to 1–179 (MFYDDDADLS…GGTRAGVIKT (179 aa)). Residues 22-25 (YGSQ), K45, S48, S50, and 80-83 (DTAQ) each bind NADP(+). H105 is a catalytic residue. G131 contributes to the NADP(+) binding site. Positions 180-325 (TFKDETETDL…KKLRDLMSWV (146 aa)) constitute a KARI C-terminal knotted domain. 4 residues coordinate Mg(2+): D188, E192, E224, and E228. S249 is a binding site for substrate.

This sequence belongs to the ketol-acid reductoisomerase family. Requires Mg(2+) as cofactor.

The catalysed reaction is (2R)-2,3-dihydroxy-3-methylbutanoate + NADP(+) = (2S)-2-acetolactate + NADPH + H(+). It catalyses the reaction (2R,3R)-2,3-dihydroxy-3-methylpentanoate + NADP(+) = (S)-2-ethyl-2-hydroxy-3-oxobutanoate + NADPH + H(+). It participates in amino-acid biosynthesis; L-isoleucine biosynthesis; L-isoleucine from 2-oxobutanoate: step 2/4. The protein operates within amino-acid biosynthesis; L-valine biosynthesis; L-valine from pyruvate: step 2/4. Involved in the biosynthesis of branched-chain amino acids (BCAA). Catalyzes an alkyl-migration followed by a ketol-acid reduction of (S)-2-acetolactate (S2AL) to yield (R)-2,3-dihydroxy-isovalerate. In the isomerase reaction, S2AL is rearranged via a Mg-dependent methyl migration to produce 3-hydroxy-3-methyl-2-ketobutyrate (HMKB). In the reductase reaction, this 2-ketoacid undergoes a metal-dependent reduction by NADPH to yield (R)-2,3-dihydroxy-isovalerate. The sequence is that of Ketol-acid reductoisomerase (NADP(+)) from Mycobacterium ulcerans (strain Agy99).